A 446-amino-acid polypeptide reads, in one-letter code: Exodeoxyribonuclease 7 large subunit (446 aa).

The protein belongs to the XseA family. In terms of assembly, heterooligomer composed of large and small subunits.

The protein localises to the cytoplasm. It carries out the reaction Exonucleolytic cleavage in either 5'- to 3'- or 3'- to 5'-direction to yield nucleoside 5'-phosphates.. Bidirectionally degrades single-stranded DNA into large acid-insoluble oligonucleotides, which are then degraded further into small acid-soluble oligonucleotides. In Ligilactobacillus salivarius (strain UCC118) (Lactobacillus salivarius), this protein is Exodeoxyribonuclease 7 large subunit.